A 551-amino-acid polypeptide reads, in one-letter code: Scaffold protein OPG125 (551 aa).

This sequence belongs to the orthopoxvirus protein OPG125 family. Interacts with the late transcription elongation factor VLTF-4/OPG110. Interacts with the late transcription factors VLTF-1.

The protein localises to the membrane. Functionally, acts with RNA polymerase to initiate transcription from late gene promoters. This is Scaffold protein OPG125 (OPG125) from Monkeypox virus.